We begin with the raw amino-acid sequence, 165 residues long: MTSLESSYLDVVAFIFREARLLDDRSWDEWLECYDPEAVFWMPCWDDADTLVDDPRKHVSLIYYSDRMGLEDRVFRLRSERSGASTPEPRTTHNIANVEILERTERQIEARFNWHTMNYRYKLLDHYFGTSFYTLKVSSSGLSILNKKVVLKNDLIHQVIDVYHV.

The protein belongs to the bacterial ring-hydroxylating dioxygenase beta subunit family. In terms of assembly, heterohexamer of 3 large (CbdA) subunits and 3 small (CbdB) subunits. The heterohexamer is part of 2-halobenzoate dioxygenase two component enzyme system. The other component is a NADH:acceptor reductase (CdbC).

It carries out the reaction a 2-halobenzoate + NADH + O2 + H(+) = a halide anion + catechol + CO2 + NAD(+). The protein operates within xenobiotic degradation; benzoate degradation via CoA ligation. In terms of biological role, component of 2-halobenzoate dioxygenase multicomponent enzyme system which catalyzes the incorporation of both atoms of molecular oxygen into 2-halobenzoate to form catechol. This Burkholderia cepacia (Pseudomonas cepacia) protein is 2-halobenzoate 1,2-dioxygenase small subunit (cbdB).